We begin with the raw amino-acid sequence, 328 residues long: Nickel import system permease protein NikB (328 aa).

6 helical membrane-spanning segments follow: residues 11-31, 104-124, 139-159, 170-190, 229-249, and 279-299; these read LMQM…LMKL, LLIS…LGII, VIST…LLFI, ILSQ…AYII, ILPI…GTVV, and VLFI…LTLL. One can recognise an ABC transmembrane type-1 domain in the interval 100–297; that stretch reads APITLLISFS…IINTIADLLT (198 aa).

The protein belongs to the binding-protein-dependent transport system permease family. OppBC subfamily. The complex is composed of two ATP-binding proteins (NikD and NikE), two transmembrane proteins (NikB and NikC) and a solute-binding protein (NikA).

It localises to the cell membrane. Functionally, part of the ABC transporter complex NikABCDE (Opp2) involved in nickel import. Probably responsible for the translocation of the substrate across the membrane. The sequence is that of Nickel import system permease protein NikB from Staphylococcus aureus (strain Mu50 / ATCC 700699).